The primary structure comprises 249 residues: uncharacterized protein (249 aa).

The protein resides in the cytoplasm. It is found in the nucleus. The protein localises to the nucleolus. This is an uncharacterized protein from Schizosaccharomyces pombe (strain 972 / ATCC 24843) (Fission yeast).